Here is a 140-residue protein sequence, read N- to C-terminus: ATP synthase epsilon chain (140 aa).

Belongs to the ATPase epsilon chain family. In terms of assembly, F-type ATPases have 2 components, CF(1) - the catalytic core - and CF(0) - the membrane proton channel. CF(1) has five subunits: alpha(3), beta(3), gamma(1), delta(1), epsilon(1). CF(0) has three main subunits: a, b and c.

It is found in the cell inner membrane. Its function is as follows. Produces ATP from ADP in the presence of a proton gradient across the membrane. This Neisseria meningitidis serogroup B (strain ATCC BAA-335 / MC58) protein is ATP synthase epsilon chain.